Reading from the N-terminus, the 237-residue chain is Phosphoribosylaminoimidazole-succinocarboxamide synthase (237 aa).

Belongs to the SAICAR synthetase family.

The enzyme catalyses 5-amino-1-(5-phospho-D-ribosyl)imidazole-4-carboxylate + L-aspartate + ATP = (2S)-2-[5-amino-1-(5-phospho-beta-D-ribosyl)imidazole-4-carboxamido]succinate + ADP + phosphate + 2 H(+). The protein operates within purine metabolism; IMP biosynthesis via de novo pathway; 5-amino-1-(5-phospho-D-ribosyl)imidazole-4-carboxamide from 5-amino-1-(5-phospho-D-ribosyl)imidazole-4-carboxylate: step 1/2. This is Phosphoribosylaminoimidazole-succinocarboxamide synthase from Listeria welshimeri serovar 6b (strain ATCC 35897 / DSM 20650 / CCUG 15529 / CIP 8149 / NCTC 11857 / SLCC 5334 / V8).